Reading from the N-terminus, the 59-residue chain is Large ribosomal subunit protein bL32 (59 aa).

A disordered region spans residues Met1–Ala21.

This sequence belongs to the bacterial ribosomal protein bL32 family.

The chain is Large ribosomal subunit protein bL32 from Magnetococcus marinus (strain ATCC BAA-1437 / JCM 17883 / MC-1).